Reading from the N-terminus, the 515-residue chain is Maturase K (515 aa).

The protein belongs to the intron maturase 2 family. MatK subfamily.

It is found in the plastid. It localises to the chloroplast. Its function is as follows. Usually encoded in the trnK tRNA gene intron. Probably assists in splicing its own and other chloroplast group II introns. The polypeptide is Maturase K (Alpinia zerumbet (Shell ginger)).